The following is a 660-amino-acid chain: Poly [ADP-ribose] polymerase 2-A (660 aa).

Positions 2–36 constitute an SAP 1 domain; it reads SARLRVEELRAELQRRGLDASGNKPVLVRRLDAAI. The tract at residues 40 to 92 is disordered; it reads EEEEAAVSAAAKEEADAGGVVDGEGNGEDKRKRKRRGDGEDVDNSESDAAKLE. The short motif at 69–75 is the Nuclear localization signal element; that stretch reads KRKRKRR. The SAP 2 domain maps to 91 to 125; that stretch reads LEGMSYRELQALAKSRGLAANGSKKEVIERLLCAP. Positions 179–281 constitute a WGR domain; it reads TYHVLQVWFL…KSFECYARKY (103 aa). The PARP alpha-helical domain maps to 308–426; that stretch reads ETKLETRIAS…EIEIATKLLE (119 aa). The region spanning 434–660 is the PARP catalytic domain; the sequence is DPLYARYKQL…LHVSFNFKKR (227 aa).

The protein belongs to the ARTD/PARP family.

Its subcellular location is the nucleus. The catalysed reaction is NAD(+) + (ADP-D-ribosyl)n-acceptor = nicotinamide + (ADP-D-ribosyl)n+1-acceptor + H(+).. It carries out the reaction L-aspartyl-[protein] + NAD(+) = 4-O-(ADP-D-ribosyl)-L-aspartyl-[protein] + nicotinamide. The enzyme catalyses L-glutamyl-[protein] + NAD(+) = 5-O-(ADP-D-ribosyl)-L-glutamyl-[protein] + nicotinamide. Involved in the base excision repair (BER) pathway, by catalyzing the poly(ADP-ribosyl)ation of a limited number of acceptor proteins involved in chromatin architecture and in DNA metabolism. This modification follows DNA damages and appears as an obligatory step in a detection/signaling pathway leading to the reparation of DNA strand breaks. This chain is Poly [ADP-ribose] polymerase 2-A (PARP2-A), found in Oryza sativa subsp. japonica (Rice).